The chain runs to 481 residues: MADQISLLLVVFTAAVALLHLIYRWWNAQRGQKRTSNEKNQELHLPPGSTGWPLIGETYSYYRSMTSNRPRQFIDDREKRYDSDVFVSHLFGSQAVISSDPQFNKYVLQNEGRFFQAHYPKALKALIGDYGLLSVHGDLQRKLHGIAVNLLRFERLKFDFMEEIQNLVHSTLDRWVDKKEIALQNECHQMVLNLMAKQLLDLSPSKETNEICELFVDYTNAVIAIPIKIPGSTYAKGLKARELLIRKISNMIKERRDHPHIVHKDLLTKLLEEDSISDEIICDFILFLLFAGHETSSRAMTFAIKFLTTCPKALTQMKEEHDAILKAKGGHKKLEWDDYKSMKFTQCVINETLRLGNFGPGVFRETKEDTKVKDCLIPKGWVVFAFLTATHLDEKFHNEALTFNPWRWELDQDVSNNHLFSPFGGGARLCPGSHLARLELALFLHIFITRFRWEALADEHPSYFPLPYLAKGFPMRLYNRE.

A helical membrane pass occupies residues 2 to 22 (ADQISLLLVVFTAAVALLHLI). Cys430 is a binding site for heme.

Belongs to the cytochrome P450 family. Heme is required as a cofactor. As to expression, expressed in young tissues such as flushing buds and green bark tissues. Lower levels in mature needles and bark.

Its subcellular location is the membrane. It catalyses the reaction abieta-7,13-dien-18-ol + 2 reduced [NADPH--hemoprotein reductase] + 2 O2 = abieta-7,13-dien-18-oate + 2 oxidized [NADPH--hemoprotein reductase] + 3 H2O + 3 H(+). Functionally, multifunctional and multisubstrate cytochrome P450 that oxidizes the respective carbon 18 of abietadienol, abietadienal, levopimaradienol, isopimara-7,15-dienol, isopimara-7,15-dienal, dehydroabietadienol, and dehydroabietadienal. In Pinus taeda (Loblolly pine), this protein is Abietadienol/abietadienal oxidase (CYP720B1).